The chain runs to 712 residues: Polyribonucleotide nucleotidyltransferase (712 aa).

Mg(2+) is bound by residues D487 and D493. The KH domain maps to P554–I613. Positions G623–K691 constitute an S1 motif domain.

This sequence belongs to the polyribonucleotide nucleotidyltransferase family. Mg(2+) is required as a cofactor.

The protein localises to the cytoplasm. The catalysed reaction is RNA(n+1) + phosphate = RNA(n) + a ribonucleoside 5'-diphosphate. In terms of biological role, involved in mRNA degradation. Catalyzes the phosphorolysis of single-stranded polyribonucleotides processively in the 3'- to 5'-direction. In Bacillus anthracis, this protein is Polyribonucleotide nucleotidyltransferase.